The primary structure comprises 1674 residues: Kinesin-like protein KIF21A (1674 aa).

Met-1 bears the N-acetylmethionine mark. The region spanning 9 to 371 (SVRVAVRIRP…LKYANRARNI (363 aa)) is the Kinesin motor domain. 88–95 (GQTGAGKT) provides a ligand contact to ATP. The stretch at 365–575 (ANRARNIKNK…NREERSVAGK (211 aa)) forms a coiled coil. A Phosphoserine modification is found at Ser-524. 3 disordered regions span residues 556–641 (KKRL…DEKA), 779–804 (EEQEKARLTESRRNREIAQLKKDQRK), and 841–881 (SDKV…AQQK). The segment covering 560-597 (QKLEESNREERSVAGKEDNTDTDQEKKEEKGVSERENN) has biased composition (basic and acidic residues). Residues 598-637 (ELEVEESQEVSDHEDEEEEEEEEEDDIDGGESSDESDSES) show a composition bias toward acidic residues. Polar residues predominate over residues 851 to 865 (KLSSSDAPAQDTGSS). Coiled coils occupy residues 931 to 1019 (TDII…AKEE) and 1053 to 1083 (LQAAQKEAQIKVLEGRLKQTEITSATQNQLL). Positions 1116 to 1138 (VEDSTDEDAPLNSPGSEGSTLSS) are disordered. Residues 1128-1138 (SPGSEGSTLSS) show a composition bias toward polar residues. Residues 1146–1167 (EVKPKNKARRRTTTQMELLYAD) form an interaction with KANK1 and KANK2 region. 2 stretches are compositionally biased toward polar residues: residues 1170–1179 (ELASDTSTGD) and 1196–1205 (GMNTETSGTS). The disordered stretch occupies residues 1170 to 1318 (ELASDTSTGD…SSLSEVHRSS (149 aa)). 4 positions are modified to phosphoserine: Ser-1212, Ser-1225, Ser-1229, and Ser-1239. Positions 1245-1262 (KAYEKAEKSKAKEQKHSD) are enriched in basic and acidic residues. Over residues 1288–1297 (NRLTVSQGNT) the composition is skewed to polar residues. WD repeat units lie at residues 1345 to 1382 (GHTKAVLCVDSTDDLLFTGSKDRTCKVWNLVTGQEIMS), 1385 to 1423 (GHPNNVVSVKYCNYTSLVFTVSTSYIKVWDIRDSAKCIR), 1449 to 1487 (SGENQINQIALNPTGTFLYAASGNAVRMWDLKRFQSTGK), 1490 to 1532 (GHLG…LGTV), 1541 to 1578 (PHYDGIEALTIQGDNLFSGSRDNGIKKWDLTQKDLLQQ), 1582 to 1621 (AHKDWVCALGVVPDHPVLLSGCRGGILKVWNMDTFMPVGE), and 1624 to 1661 (GHDSPINAICVNSTHIFTAADDRTVRIWKARNLQDGQI). Ser-1662 is modified (phosphoserine). Thr-1664 carries the post-translational modification Phosphothreonine. Ser-1673 carries the post-translational modification Phosphoserine.

This sequence belongs to the TRAFAC class myosin-kinesin ATPase superfamily. Kinesin family. As to quaternary structure, part of a cortical microtubule stabilization complex (CMSC) composed of KANK1, PPFIA1, PPFIBP1, ERC1/ELKS, PHLDB2/LL5beta, CLASPs, KIF21A and possibly additional interactors; within CMSCs KANK1 and PHLDB2/LL5beta seem to be the core components for recruiting microtubule-binding proteins KIF21A and CLASPs, whereas PPFIA1, PPFIBP1 and ERC1/ELKS serve as scaffolds for protein clustering. Interacts (via residues 1146-1167) with KANK1 (via ankyrin repeats 1-5) and KANK2 (via ankyrin repeats 1-5).

Its subcellular location is the cytoplasm. The protein localises to the cytoskeleton. It is found in the cell cortex. The protein resides in the cell projection. It localises to the axon. Its subcellular location is the dendrite. The protein localises to the growth cone. Processive microtubule plus-end directed motor protein involved in neuronal axon guidance. Is recruited by KANK1 to cortical microtubule stabilizing complexes (CMSCs) at focal adhesions (FAs) rims where it promotes microtubule capture and stability. Controls microtubule polymerization rate at axonal growth cones and suppresses microtubule growth without inducing microtubule disassembly once it reaches the cell cortex. This chain is Kinesin-like protein KIF21A (KIF21A), found in Homo sapiens (Human).